The sequence spans 545 residues: Cryptochrome-1 (545 aa).

One can recognise a Photolyase/cryptochrome alpha/beta domain in the interval 3-138 (VNNILWFRHG…KCVEKVSHTL (136 aa)). FAD is bound by residues Arg-236, Ser-264, Ser-266, Gln-307, His-374, 406 to 408 (DAD), Cys-412, and Asn-415.

This sequence belongs to the DNA photolyase class-1 family. In terms of assembly, interacts with tim and per; promoted by light conditions. It depends on FAD as a cofactor.

It is found in the cytoplasm. The protein localises to the perinuclear region. Its subcellular location is the nucleus. Blue light-dependent regulator that is the input of the circadian feedback loop. Has no photolyase activity for cyclobutane pyrimidine dimers or 6-4 photoproducts. Regulation of expression by light suggests a role in photoreception for locomotor activity rhythms. Functions, together with per, as a transcriptional repressor required for the oscillation of peripheral circadian clocks and for the correct specification of clock cells. Genes directly activated by the transcription factors Clock (Clk) and cycle (cyc) are repressed by cry. This chain is Cryptochrome-1, found in Aedes aegypti (Yellowfever mosquito).